Reading from the N-terminus, the 695-residue chain is MESSRGPPRVKNKAPAPVQISAEQLLREAVDRQEVNLQTPTQRFADLEELKEYQGRKRKEFEDYVRRNRVRLSNWLQYAQWELEQKEFARARSVFERALDVHPNNTQLWIRYVQAEIKNRNINHARNLLDRAVTRLPRVTSLWYQYLYVMEMLGDIPGTRQVFDRWMKWQPDEQAWSAYIRLEKRYGEFDRAREIFRAFTAVHPEPRTWLKWAKFEEEYGTSDTVREVFQTAIQTIAETLGDDAVDERIFIAFARYEARLREYERARAIYKFGLDNLPRSKSMTLHAHYTTFEKQFGDKEGVEDVILTKRRRLYEEQVKENAKNYDVWFDFARLEESGGDVDRTREVYERAIAQVPPTQEKRHWRRYIFLFLFYAIWEERETKDIGRARQIYDTCLNLIPHKKFTFAKVWVAKAHFEIRQGQLTTARKTLGRAIGMCPKDKIFKEYILLEQKLYEFERCRTLYEKHVMYNPANCQTWIKWAELERGLDDLERTRAIFELAVSQPILDMPEVVWKAYIDFEEEEGEYERTRALYERLLEKADHPKVWISYAQFEINIPDEAEEEEETEEEVEEKPVSEEAKARARKIFERAHKSMKERELKAERVSLLNAWLAFEKTHGSAEDIEKIQKQMPRKTKKKRKLEDDTWEEYVDYIFPADDQQTKNLSSLLAMANAWKQQAAGGAGGAAVDEAAQGGSS.

16 HAT repeats span residues 52–84 (EYQG…WELE), 86–118 (KEFA…AEIK), 120–152 (RNIN…VMEM), 154–185 (GDIP…LEKR), 187–218 (GEFD…FEEE), 220–259 (GTSD…YEAR), 261–295 (REYE…FEKQ), 305–337 (VILT…LEES), 339–373 (GDVD…LFLF), 383–419 (KDIG…FEIR), 421–452 (GQLT…LEQK), 454–486 (YEFE…LERG), 488–522 (DDLE…FEEE), 524–555 (GEYE…FEIN), 578–616 (EAKA…FEKT), and 621–654 (EDIE…YIFP).

The protein belongs to the crooked-neck family. In terms of assembly, associated with the spliceosome.

The protein localises to the nucleus. Involved in pre-mRNA splicing and cell cycle progression. Required for the spliceosome assembly and initiation of the DNA replication. This chain is Pre-mRNA-splicing factor clf-1 (clf-1), found in Neurospora crassa (strain ATCC 24698 / 74-OR23-1A / CBS 708.71 / DSM 1257 / FGSC 987).